A 124-amino-acid chain; its full sequence is Large ribosomal subunit protein uL18 (124 aa).

The protein belongs to the universal ribosomal protein uL18 family. In terms of assembly, part of the 50S ribosomal subunit; part of the 5S rRNA/L5/L18/L25 subcomplex. Contacts the 5S and 23S rRNAs.

This is one of the proteins that bind and probably mediate the attachment of the 5S RNA into the large ribosomal subunit, where it forms part of the central protuberance. The polypeptide is Large ribosomal subunit protein uL18 (Aquifex aeolicus (strain VF5)).